The following is a 201-amino-acid chain: Small ribosomal subunit protein uS4c (201 aa).

The segment at 20 to 44 (GLTSKRPTVGSELRNQSRSTKKSQY) is disordered. The region spanning 89 to 150 (MRLDNILFRL…NKKSKTLIQN (62 aa)) is the S4 RNA-binding domain.

It belongs to the universal ribosomal protein uS4 family. Part of the 30S ribosomal subunit. Contacts protein S5. The interaction surface between S4 and S5 is involved in control of translational fidelity.

The protein resides in the plastid. It is found in the chloroplast. Its function is as follows. One of the primary rRNA binding proteins, it binds directly to 16S rRNA where it nucleates assembly of the body of the 30S subunit. Functionally, with S5 and S12 plays an important role in translational accuracy. The protein is Small ribosomal subunit protein uS4c (rps4) of Lotus japonicus (Lotus corniculatus var. japonicus).